A 364-amino-acid polypeptide reads, in one-letter code: GDSL esterase/lipase EXL3 (364 aa).

The N-terminal stretch at 1-32 (MKDNSSWSCSCSWSSWKICLLSVLFLTETITA) is a signal peptide. S50 (nucleophile) is an active-site residue. Active-site residues include D339 and H342.

The protein belongs to the 'GDSL' lipolytic enzyme family. Flower buds.

The protein resides in the secreted. In Arabidopsis thaliana (Mouse-ear cress), this protein is GDSL esterase/lipase EXL3 (EXL3).